An 859-amino-acid chain; its full sequence is Sulfate permease 1 (859 aa).

Residues N51 and N93 are each glycosylated (N-linked (GlcNAc...) asparagine). Helical transmembrane passes span 94–114, 116–136, 148–168, 173–193, 206–226, 234–254, 292–312, and 332–352; these read LTAK…KWFP, YNFT…CVLV, LSPE…SLFA, VCIG…AEVL, PIIA…LGIL, LISL…IIWG, FGLI…TFGI, and FYFY…TAIS. N358 and N391 each carry an N-linked (GlcNAc...) asparagine glycan. 4 helical membrane-spanning segments follow: residues 395–415, 428–448, 468–488, and 525–545; these read EIPA…KSFG, LIAI…PATG, VFTG…FFFI, and FIVT…YFAM. N-linked (GlcNAc...) asparagine glycans are attached at residues N630, N653, and N718. One can recognise an STAS domain in the interval 630–808; it reads NTTVRPPPPG…SIIAGHSSFH (179 aa).

It belongs to the SLC26A/SulP transporter (TC 2.A.53) family.

The protein localises to the membrane. Functionally, high affinity uptake of sulfate into the cell. The polypeptide is Sulfate permease 1 (SUL1) (Saccharomyces cerevisiae (strain ATCC 204508 / S288c) (Baker's yeast)).